The chain runs to 244 residues: tRNA (guanine-N(7)-)-methyltransferase (244 aa).

The tract at residues 1–20 is disordered; it reads MTNPFDSAGSKAPPKPFTVS. 4 residues coordinate S-adenosyl-L-methionine: Glu-75, Glu-100, Asp-127, and Asp-150. The active site involves Asp-150. Residue Lys-154 coordinates substrate. The interval 156–161 is interaction with RNA; it reads RHNKRR. Substrate contacts are provided by residues Asp-186 and 223-226; that span reads THFE.

It belongs to the class I-like SAM-binding methyltransferase superfamily. TrmB family.

The enzyme catalyses guanosine(46) in tRNA + S-adenosyl-L-methionine = N(7)-methylguanosine(46) in tRNA + S-adenosyl-L-homocysteine. The protein operates within tRNA modification; N(7)-methylguanine-tRNA biosynthesis. Catalyzes the formation of N(7)-methylguanine at position 46 (m7G46) in tRNA. The chain is tRNA (guanine-N(7)-)-methyltransferase from Stenotrophomonas maltophilia (strain K279a).